A 398-amino-acid polypeptide reads, in one-letter code: Metal tolerance protein 1 (398 aa).

Over 1–56 (MESSSPHHSHIVEVNVGKSDEERIIVASKVCGEAPCGFSDSKNASGDAHERSASMR) the chain is Cytoplasmic. The chain crosses the membrane as a helical span at residues 57–77 (KLCIAVVLCLVFMSVEVVGGI). Topologically, residues 78 to 89 (KANSLAILTDAA) are vacuolar. A helical membrane pass occupies residues 90–110 (HLLSDVAAFAISLFSLWAAGW). Residues 111–122 (EATPRQTYGFFR) are Cytoplasmic-facing. Residues 123 to 143 (IEILGALVSIQLIWLLTGILV) form a helical membrane-spanning segment. The Vacuolar portion of the chain corresponds to 144 to 159 (YEAIIRIVTETSEVNG). A helical membrane pass occupies residues 160–180 (FLMFLVAAFGLVVNIIMAVLL). At 181–263 (GHDHGHSHGH…KRNINLQGAY (83 aa)) the chain is on the cytoplasmic side. The required for zinc-binding stretch occupies residues 182 to 232 (HDHGHSHGHGHGHGHDHHNHSHGVTVTTHHHHHDHEHGHSHGHGEDKHHAH). Residues 186 to 232 (HSHGHGHGHGHDHHNHSHGVTVTTHHHHHDHEHGHSHGHGEDKHHAH) form a disordered region. Over residues 187-202 (SHGHGHGHGHDHHNHS) the composition is skewed to basic residues. Basic and acidic residues predominate over residues 216–232 (HEHGHSHGHGEDKHHAH). A helical membrane pass occupies residues 264-284 (LHVLGDSIQSVGVMIGGAIIW). Residues 285–290 (YNPEWK) are Vacuolar-facing. The helical transmembrane segment at 291–311 (IVDLICTLAFSVIVLGTTINM) threads the bilayer. Topologically, residues 312–398 (IRNILEVLME…ISHVTIQIER (87 aa)) are cytoplasmic.

The protein belongs to the cation diffusion facilitator (CDF) transporter (TC 2.A.4) family. SLC30A subfamily. Ubiquitously expressed at low levels.

The protein resides in the vacuole membrane. In terms of biological role, mediates zinc accumulation in roots and confers resistance to zinc. Involved in sequestration of excess zinc in the cytoplasm into vacuoles to maintain zinc homeostasis. Can also transport cadmium with a low efficiency. In Arabidopsis thaliana (Mouse-ear cress), this protein is Metal tolerance protein 1.